Consider the following 355-residue polypeptide: Phospho-N-acetylmuramoyl-pentapeptide-transferase (355 aa).

10 helical membrane-spanning segments follow: residues 3–23 (GVLI…PWVI), 56–76 (VIIV…GIGF), 80–100 (GLLV…DDYI), 120–140 (AAVA…AGLL), 152–172 (TSLT…IAAT), 185–205 (LAAG…FWQF), 224–244 (PLDV…FLWW), 251–271 (IFMG…IAIV), 276–296 (LLLV…MIQV), and 330–350 (FWIV…AEFL).

Belongs to the glycosyltransferase 4 family. MraY subfamily. Mg(2+) is required as a cofactor.

It is found in the cell membrane. The catalysed reaction is UDP-N-acetyl-alpha-D-muramoyl-L-alanyl-gamma-D-glutamyl-meso-2,6-diaminopimeloyl-D-alanyl-D-alanine + di-trans,octa-cis-undecaprenyl phosphate = di-trans,octa-cis-undecaprenyl diphospho-N-acetyl-alpha-D-muramoyl-L-alanyl-D-glutamyl-meso-2,6-diaminopimeloyl-D-alanyl-D-alanine + UMP. It participates in cell wall biogenesis; peptidoglycan biosynthesis. Functionally, catalyzes the initial step of the lipid cycle reactions in the biosynthesis of the cell wall peptidoglycan: transfers peptidoglycan precursor phospho-MurNAc-pentapeptide from UDP-MurNAc-pentapeptide onto the lipid carrier undecaprenyl phosphate, yielding undecaprenyl-pyrophosphoryl-MurNAc-pentapeptide, known as lipid I. This Frankia alni (strain DSM 45986 / CECT 9034 / ACN14a) protein is Phospho-N-acetylmuramoyl-pentapeptide-transferase.